The sequence spans 251 residues: Short chain dehydrogenase gsfK (251 aa).

Leu14, Thr33, Glu60, Asn88, and Lys122 together coordinate NADP(+). Residues Ser143 and Tyr161 each act as proton donor in the active site. NADP(+) contacts are provided by Tyr161, Lys165, Val192, and Thr194. The Lowers pKa of active site Tyr role is filled by Lys165.

The protein belongs to the short-chain dehydrogenases/reductases (SDR) family.

Its pathway is secondary metabolite biosynthesis; terpenoid biosynthesis. In terms of biological role, short chain dehydrogenase; part of the gene cluster that mediates the biosynthesis of griseofulvin, an important antifungal drug that has been in use for a long time for treating dermatophyte infections. The first step of the pathway is the formation of the heptaketide backbone by gsfA which is initiated by priming with acetyl-CoA, followed by sequential condensations of 6 malonyl-CoA units. The resulting benzophenone can undergo a spontaneous dehydration to form norlichexanthone. However, the true precursor for the griseofulvin biosynthesis is not norlichexanthone, but the heptaketide benzophenone that is O-methylated at 3-OH by gsfB to produce griseophenone D which is further methylated at 9-OH by gsfC to yield griseophenone C. Griseophenone C is then substrate of halogenase gsfI which is responsible for the regio-specific chlorination at the C13 position to form griseophenone B. The cytochrome P450 gsfF catalyzes the coupling of orcinol and phloroglucinol rings in griseophenone B to form desmethyl-dehydrogriseofulvin A which is further methylated at 5-OH by gsfD to yield dehydrogriseofulvin. Finally, gsfE performs stereospecific reduction of enone 18 of dehydrogriseofulvin to afford the final product griseofulvin. The exact role of gsfK within the pathway has not been identified yet. The protein is Short chain dehydrogenase gsfK of Penicillium aethiopicum.